Reading from the N-terminus, the 47-residue chain is Defensin Ec-AMP-D1 (47 aa).

4 disulfide bridges follow: C3/C47, C14/C34, C20/C41, and C24/C43.

Functionally, has antifungal activity. Inhibits spore germination in F.graminearum (IC(50)=15 ug/ml), F.oxysporum (IC(50)=102 ug/ml), F.verticillioides (IC(50)=8.5 ug/ml) and D.maydis (IC(50)=12.5 ug/ml), but not in C.graminicola, B.cinerea and H.sativum at concentrations below 30 ug/ml. Inhibits hyphal development in P.infestans (IC(50)=25.5 ug/ml), but not release of zoospores. At concentrations above 100 ug/ml, induces morphological changes such as lysis of hyphae and sporangia in P.infestans. The sequence is that of Defensin Ec-AMP-D1 from Echinochloa crus-galli (Barnyard grass).